The following is a 125-amino-acid chain: C-X-C motif chemokine 9 (125 aa).

The N-terminal stretch at 1–22 is a signal peptide; sequence MKKSGVLFLLGIILLVLIGVQG. 2 disulfide bridges follow: Cys-31–Cys-58 and Cys-33–Cys-74. The interval 93–125 is disordered; the sequence is VSQKKKQKNGKKHQKKKVLKVRKSQRSRQKKTT. The segment covering 94–125 has biased composition (basic residues); the sequence is SQKKKQKNGKKHQKKKVLKVRKSQRSRQKKTT.

Belongs to the intercrine alpha (chemokine CxC) family.

The protein resides in the secreted. Functionally, cytokine that affects the growth, movement, or activation state of cells that participate in immune and inflammatory response. Chemotactic for activated T-cells. Binds to CXCR3. The polypeptide is C-X-C motif chemokine 9 (CXCL9) (Homo sapiens (Human)).